The sequence spans 530 residues: AAA-ATPase At3g28510 (530 aa).

A helical membrane pass occupies residues 5–25 (GAIWGITGTTVTSFMFFWAIY). 250–257 (GPPGTGKS) serves as a coordination point for ATP. Disordered regions lie at residues 312–339 (QRKK…KVDD) and 463–530 (KARK…KSDS). 2 stretches are compositionally biased toward basic and acidic residues: residues 326–339 (EEKK…KVDD) and 463–511 (KARK…KEEN). A compositionally biased stretch (polar residues) spans 512 to 523 (GNVSQQNGNSID).

It belongs to the AAA ATPase family. BCS1 subfamily. Mg(2+) serves as cofactor.

The protein resides in the membrane. The enzyme catalyses ATP + H2O = ADP + phosphate + H(+). The polypeptide is AAA-ATPase At3g28510 (Arabidopsis thaliana (Mouse-ear cress)).